A 150-amino-acid chain; its full sequence is Retinal rod rhodopsin-sensitive cGMP 3',5'-cyclic phosphodiesterase subunit delta (150 aa).

Residues 144 to 150 form a required for association with membranes region; it reads RVRLFYV.

The protein belongs to the PDE6D/unc-119 family. In terms of assembly, interacts with the prenylated catalytic subunits of PDE6, an oligomer composed of two catalytic chains (PDE6A and PDE6B) and two inhibitory chains (gamma); has no effect on enzyme activity but promotes the release of the prenylated enzyme from cell membrane. Interacts with prenylated GRK1 and GRK7. Interacts with prenylated Ras family members, including RAP2A and RAP2C. Interacts with prenylated RHEB and NRAS. Interacts with prenylated HRAS and KRAS. Interacts with RAB13 (prenylated form); dissociates RAB13 from membranes. Interacts with prenylated INPP5E. Interacts with RAB28 (prenylated form); the interaction promotes RAB28 delivery to the photoreceptor outer segments. Interacts with RPGR. Interacts with ARL2. Interacts with ARL3; the interaction occurs specifically with the GTP-bound form of ARL3. Interaction with ARL2 and ARL3 promotes release of farnesylated cargo proteins. Widely expressed. Detected in various tissues including spleen, prostate gland, testis, ovary, small intestine, colon, retina, and peripheral blood.

The protein resides in the cytoplasm. It is found in the cytosol. The protein localises to the cytoplasmic vesicle membrane. Its subcellular location is the cytoskeleton. It localises to the cilium basal body. In terms of biological role, promotes the release of prenylated target proteins from cellular membranes. Modulates the activity of prenylated or palmitoylated Ras family members by regulating their subcellular location. Required for normal ciliary targeting of farnesylated target proteins, such as INPP5E. Required for RAB28 localization to the cone cell outer segments in the retina. Modulates the subcellular location of target proteins by acting as a GTP specific dissociation inhibitor (GDI). Increases the affinity of ARL3 for GTP by several orders of magnitude. Stabilizes ARL3-GTP by decreasing the nucleotide dissociation rate. The protein is Retinal rod rhodopsin-sensitive cGMP 3',5'-cyclic phosphodiesterase subunit delta (PDE6D) of Homo sapiens (Human).